A 656-amino-acid chain; its full sequence is Chaperone protein DnaK (656 aa).

Position 204 is a phosphothreonine; by autocatalysis (T204). The disordered stretch occupies residues 607-656 (VYAKKGGAAGAPPGGEAEGEPQAQAGGKKEDVVDAEFEEVKDEKKKDEDK). A compositionally biased stretch (low complexity) spans 620–632 (GGEAEGEPQAQAG). A compositionally biased stretch (basic and acidic residues) spans 647–656 (KDEKKKDEDK).

This sequence belongs to the heat shock protein 70 family.

In terms of biological role, acts as a chaperone. This is Chaperone protein DnaK from Coxiella burnetii (strain CbuK_Q154) (Coxiella burnetii (strain Q154)).